A 328-amino-acid polypeptide reads, in one-letter code: 2-oxoglutarate-dependent dioxygenase gloE (328 aa).

Residues 170–271 (TRTNLTFLKY…RYTLAYFLRP (102 aa)) enclose the Fe2OG dioxygenase domain. Residues His194, Asp196, and His249 each coordinate Fe cation. Arg262 contacts 2-oxoglutarate.

It belongs to the iron/ascorbate-dependent oxidoreductase family. Requires Fe(2+) as cofactor.

Its pathway is mycotoxin biosynthesis. In terms of biological role, 2-oxoglutarate-dependent dioxygenase; part of the gene cluster that mediates the biosynthesis of pneumocandins, lipohexapeptides of the echinocandin family that prevent fungal cell wall formation by non-competitive inhibition of beta-1,3-glucan synthase. The 10,12-dimethylmyristoyl side chain is synthesized by the reducing polyketide synthase gloL/GLPKS4. The thioesterase gloN/GLHYD exclusively interacts with gloL/GLPKS4 to maintain turnover of the polyketide side chain. The 10R,12S-dimethylmyristic acid is then transferred to the first thiolation domain of the nonribosomal peptide synthetase gloA/GLNRPS4 by the acyl-AMP ligase gloD/GLligase, followed by its acylation to L-ornithine to trigger elongation of the cyclic hexapeptide. L-ornithine, 4R-hydroxyl-L-proline (generated from L-proline by the dioxygenase gloF/GLOXY2), 3S-hydroxyl-L-homotyrosine (generated by gloG/GLHtyB, gloH/GLHtyA, gloI/GLHtyC, gloJ/GLHtyD and hydroxylated at C-3 by the dioxygenase gloM/GLOXY1), 3R-hydroxyl-L-glutamine (generated from L-glutamine probably by the dioxygenase gloE/GLOXY3) and 3S-hydroxyl-L-proline (generated from L-proline by the dioxygenase gloF/GLOXY2 to yield pneumocandin B0), or 3S-hydroxyl-4S-methyl-L-proline (generated from L-leucine by the dioxygenase gloC/GLOXY4 to yield pneumocandin A0) are sequentially added to the growing chain. The last C domain of gloA/GLNRPS4 is proposed to be responsible for cyclization by condensation to form the peptide bond between L-ornithine and 3S-hydroxyl-4S-methyl-L-proline (for pneumocandin A0) or 3S-hydroxyl-L-proline (for pneumocandin B0). Finally, the subsequent C-4 hydroxylation of 3S-hydroxyl-L-homotyrosine and L-ornithine dihydroxylation at C-4 and C-5 are performed by the cytochrome P450 monooxygenases gloP/GLP450-1 and gloO/GLP450-2, respectively. This Glarea lozoyensis (strain ATCC 20868 / MF5171) protein is 2-oxoglutarate-dependent dioxygenase gloE.